The sequence spans 299 residues: GTPase Era (299 aa).

The 168-residue stretch at 4–171 (KSGFVAILGR…VDILSENLGE (168 aa)) folds into the Era-type G domain. The segment at 12 to 19 (GRPNVGKS) is G1. 12 to 19 (GRPNVGKS) provides a ligand contact to GTP. Positions 38-42 (QTTRN) are G2. The segment at 59–62 (DTPG) is G3. GTP-binding positions include 59–63 (DTPGI) and 121–124 (NKID). The G4 stretch occupies residues 121 to 124 (NKID). The segment at 150–152 (ISA) is G5. Residues 202-280 (TREEIPHSVA…FLETWVKVKK (79 aa)) enclose the KH type-2 domain.

The protein belongs to the TRAFAC class TrmE-Era-EngA-EngB-Septin-like GTPase superfamily. Era GTPase family. As to quaternary structure, monomer.

Its subcellular location is the cytoplasm. The protein localises to the cell membrane. Functionally, an essential GTPase that binds both GDP and GTP, with rapid nucleotide exchange. Plays a role in 16S rRNA processing and 30S ribosomal subunit biogenesis and possibly also in cell cycle regulation and energy metabolism. The polypeptide is GTPase Era (Streptococcus pneumoniae (strain JJA)).